The following is a 173-amino-acid chain: Photosystem I assembly protein Ycf3 (173 aa).

TPR repeat units lie at residues alanine 36–glutamate 69, serine 73–leucine 106, and glycine 121–asparagine 154.

This sequence belongs to the Ycf3 family.

Its subcellular location is the cellular thylakoid membrane. Essential for the assembly of the photosystem I (PSI) complex. May act as a chaperone-like factor to guide the assembly of the PSI subunits. This is Photosystem I assembly protein Ycf3 from Synechococcus sp. (strain JA-2-3B'a(2-13)) (Cyanobacteria bacterium Yellowstone B-Prime).